Reading from the N-terminus, the 191-residue chain is MTEPKRGRVQWDEANIVEIESNKPVRQKITEPKTPYHPMMDDDGSLSPRGRAFDECVDDMQRAEELRNVLNDAAASSSRNSSQGSGGGGWSSSDEEEEEADPMDQDEEGSGSGKNERFNAHRKAHYDEFRKVKELRSSGSFYEEEEEEDDGAKGSKSETTTNSRHTKGGNKELDATKTVSGTSSSSSPELI.

The segment covering 20–31 (ESNKPVRQKITE) has biased composition (basic and acidic residues). 2 disordered regions span residues 20-52 (ESNK…RGRA) and 67-191 (RNVL…PELI). Ser-45 and Ser-47 each carry phosphoserine. Residues 93–109 (SDEEEEEADPMDQDEEG) are compositionally biased toward acidic residues. Residues 114–136 (KNERFNAHRKAHYDEFRKVKELR) show a composition bias toward basic and acidic residues.

In terms of assembly, interacts with protein phosphatase 1. Interacts with TOPP1, SRK2D/SNRK2.2, SRK2I/SNRK2.3, SRK2E/SNRK2.6, SRK2C/SNRK2.8 and PYL11. In terms of processing, phosphorylated in vivo. As to expression, expressed in roots, cotyledons, leaves, flowers and siliques.

The protein resides in the nucleus. Its subcellular location is the cytoplasm. Its function is as follows. Inhibitor of protein-phosphatase 1 (PP1). Binds to and inhibits PP1 activity. Acts as negative regulator of abscisic acid (ABA) signaling. Enhances the inhibition of SRK2E/SNRK2.6 by TOPP1. May promote the interaction between TOPP1 and the ABA receptor PYL11. The sequence is that of Protein phosphatase inhibitor 2 from Arabidopsis thaliana (Mouse-ear cress).